Reading from the N-terminus, the 483-residue chain is Altronate oxidoreductase (483 aa).

18 to 29 (IIQFGEGNFLRA) lines the NAD(+) pocket.

The protein belongs to the mannitol dehydrogenase family. UxaB subfamily.

It carries out the reaction D-altronate + NAD(+) = keto-D-tagaturonate + NADH + H(+). The protein operates within carbohydrate metabolism; pentose and glucuronate interconversion. This Escherichia coli O1:K1 / APEC protein is Altronate oxidoreductase.